The primary structure comprises 956 residues: Transient receptor potential channel pyrexia (956 aa).

Residues M1–K491 lie on the Cytoplasmic side of the membrane. ANK repeat units follow at residues R132 to R161, K166 to I195, E198 to T227, Y231 to S260, G265 to C294, S298 to A327, D331 to K362, and Y366 to A395. Residues F492–I512 form a helical membrane-spanning segment. At W513 to C525 the chain is on the extracellular side. A helical transmembrane segment spans residues V526–L546. At G547–E565 the chain is on the cytoplasmic side. Residues N566–T584 form a helical membrane-spanning segment. The Extracellular portion of the chain corresponds to V585–A601. The chain crosses the membrane as a helical span at residues A602–F622. The Cytoplasmic portion of the chain corresponds to G623–K638. Residues F639–N659 traverse the membrane as a helical segment. Over D660–H701 the chain is Extracellular. Residue N666 is glycosylated (N-linked (GlcNAc...) asparagine). A helical transmembrane segment spans residues I702–L722. Residues A723–R956 are Cytoplasmic-facing.

This sequence belongs to the transient receptor (TC 1.A.4) family. STrpC subfamily. In terms of assembly, homooligomer; between isoform A and isoform B. In terms of tissue distribution, expressed in various peripheral nerves and the central nerves in embryos. In adults, it is expressed in sensory neurons lying beneath the bristles around eyes, neurons innervating the bristles on the back of thorax and neurons in maxillary palps, proboscis and antennae. Expressed in multidendritic neurons, which mediate temperature sensing, as well as non-multidendritic neurons in larval epidermis. Localizes ubiquitously throughout neurites.

It localises to the membrane. Functionally, receptor-activated non-selective cation channel involved in protection or tolerance from high temperature stress. Activated by temperatures above 40 degrees Celsius. More permeable to K(+) than to Na(+). May act in stress protection allow flies to survive in natural environments. In Drosophila melanogaster (Fruit fly), this protein is Transient receptor potential channel pyrexia (pyx).